Consider the following 457-residue polypeptide: ATP synthase subunit beta (457 aa).

ATP is bound at residue 150-157 (GGAGVGKT).

It belongs to the ATPase alpha/beta chains family. In terms of assembly, F-type ATPases have 2 components, CF(1) - the catalytic core - and CF(0) - the membrane proton channel. CF(1) has five subunits: alpha(3), beta(3), gamma(1), delta(1), epsilon(1). CF(0) has three main subunits: a(1), b(2) and c(9-12). The alpha and beta chains form an alternating ring which encloses part of the gamma chain. CF(1) is attached to CF(0) by a central stalk formed by the gamma and epsilon chains, while a peripheral stalk is formed by the delta and b chains.

It localises to the cell membrane. The enzyme catalyses ATP + H2O + 4 H(+)(in) = ADP + phosphate + 5 H(+)(out). Its function is as follows. Produces ATP from ADP in the presence of a proton gradient across the membrane. The catalytic sites are hosted primarily by the beta subunits. The sequence is that of ATP synthase subunit beta from Baumannia cicadellinicola subsp. Homalodisca coagulata.